Consider the following 1204-residue polypeptide: ATP-dependent helicase/nuclease subunit A (1204 aa).

A UvrD-like helicase ATP-binding domain is found at 2–472 (PQFTKEQEKA…ILLSDNFRST (471 aa)). 23-30 (ASAGSGKT) provides a ligand contact to ATP. The UvrD-like helicase C-terminal domain occupies 500–783 (GQLIFGAKYY…RLMTIHGSKG (284 aa)).

This sequence belongs to the helicase family. AddA subfamily. Heterodimer of AddA and AddB/RexB. Mg(2+) serves as cofactor.

The catalysed reaction is Couples ATP hydrolysis with the unwinding of duplex DNA by translocating in the 3'-5' direction.. The enzyme catalyses ATP + H2O = ADP + phosphate + H(+). Functionally, the heterodimer acts as both an ATP-dependent DNA helicase and an ATP-dependent, dual-direction single-stranded exonuclease. Recognizes the chi site generating a DNA molecule suitable for the initiation of homologous recombination. The AddA nuclease domain is required for chi fragment generation; this subunit has the helicase and 3' -&gt; 5' nuclease activities. The protein is ATP-dependent helicase/nuclease subunit A of Lactobacillus helveticus (strain DPC 4571).